A 944-amino-acid polypeptide reads, in one-letter code: UvrABC system protein A (944 aa).

33–40 (GLSGSGKS) provides a ligand contact to ATP. The C4-type zinc-finger motif lies at 252-279 (CPICGFSIGELEPRMFSFNSPFGACPTC). ABC transporter domains are found at residues 309–587 (WEPT…KKSL) and 607–935 (ITDR…QYLK). 639-646 (GVSGSGKS) serves as a coordination point for ATP. Residues 738-764 (CEACKGDGIIKIEMHFLPDVYVPCEVC) form a C4-type zinc finger.

It belongs to the ABC transporter superfamily. UvrA family. As to quaternary structure, forms a heterotetramer with UvrB during the search for lesions.

It localises to the cytoplasm. In terms of biological role, the UvrABC repair system catalyzes the recognition and processing of DNA lesions. UvrA is an ATPase and a DNA-binding protein. A damage recognition complex composed of 2 UvrA and 2 UvrB subunits scans DNA for abnormalities. When the presence of a lesion has been verified by UvrB, the UvrA molecules dissociate. This chain is UvrABC system protein A, found in Staphylococcus epidermidis (strain ATCC 12228 / FDA PCI 1200).